The primary structure comprises 354 residues: Long form salivary protein D7L3 (354 aa).

The first 26 residues, 1–26, serve as a signal peptide directing secretion; it reads MQLTPRSVHLVHLLLAATTLISPSWS.

It belongs to the PBP/GOBP family.

It localises to the secreted. In terms of biological role, modulates blood feeding of female mosquitoes on vertebrate species by binding and sequestering different mediators involved in the host response. Binds serotonin with high affinity. Binds weakly noradrenaline and histamine. Does not bind tryptamine, octopamine, dopamine, adrenaline, leukotriene C4, leukotriene D4, leukotriene B4, ADP and U-46619, a stable analog of thromboxane A2. Inhibits agonist-induced platelet aggregation. Exhibits vasodilating activity. The protein is Long form salivary protein D7L3 of Anopheles gambiae (African malaria mosquito).